A 564-amino-acid polypeptide reads, in one-letter code: Efflux pump hmp6 (564 aa).

The segment covering Met-1–Pro-25 has biased composition (basic and acidic residues). The interval Met-1 to Asp-46 is disordered. 8 helical membrane passes run Leu-58–Ile-78, Val-96–Tyr-118, Ile-125–Pro-145, Ile-156–Val-176, Gly-186–Phe-206, Trp-214–Phe-234, Phe-259–Gly-279, and Ile-289–Phe-309. N-linked (GlcNAc...) asparagine glycans are attached at residues Asn-312 and Asn-322. 4 helical membrane-spanning segments follow: residues Ile-330–Phe-350, Ser-361–Val-383, Ala-395–Ser-415, and Ile-452–Ala-472.

It belongs to the major facilitator superfamily. TCR/Tet family.

The protein localises to the cell membrane. In terms of biological role, efflux pump that might be required for efficient secretion of hypothemycin or other secondary metabolies produced by the hypothemycin gene cluster. In Hypomyces subiculosus (Nectria subiculosa), this protein is Efflux pump hmp6.